The chain runs to 304 residues: Ribosomal protein L11 methyltransferase (304 aa).

The S-adenosyl-L-methionine site is built by Thr-152, Gly-173, Asp-195, and Asn-234.

Belongs to the methyltransferase superfamily. PrmA family.

Its subcellular location is the cytoplasm. It catalyses the reaction L-lysyl-[protein] + 3 S-adenosyl-L-methionine = N(6),N(6),N(6)-trimethyl-L-lysyl-[protein] + 3 S-adenosyl-L-homocysteine + 3 H(+). Functionally, methylates ribosomal protein L11. This Cupriavidus metallidurans (strain ATCC 43123 / DSM 2839 / NBRC 102507 / CH34) (Ralstonia metallidurans) protein is Ribosomal protein L11 methyltransferase.